A 78-amino-acid chain; its full sequence is Acyl carrier protein (78 aa).

In terms of domain architecture, Carrier spans Ser-2–Gln-77. Residue Ser-37 is modified to O-(pantetheine 4'-phosphoryl)serine.

It belongs to the acyl carrier protein (ACP) family. In terms of processing, 4'-phosphopantetheine is transferred from CoA to a specific serine of apo-ACP by AcpS. This modification is essential for activity because fatty acids are bound in thioester linkage to the sulfhydryl of the prosthetic group.

It is found in the cytoplasm. It participates in lipid metabolism; fatty acid biosynthesis. Its function is as follows. Carrier of the growing fatty acid chain in fatty acid biosynthesis. The chain is Acyl carrier protein from Yersinia pseudotuberculosis serotype O:1b (strain IP 31758).